The sequence spans 102 residues: Large ribosomal subunit protein bL21 (102 aa).

It belongs to the bacterial ribosomal protein bL21 family. Part of the 50S ribosomal subunit. Contacts protein L20.

In terms of biological role, this protein binds to 23S rRNA in the presence of protein L20. In Ligilactobacillus salivarius (strain UCC118) (Lactobacillus salivarius), this protein is Large ribosomal subunit protein bL21.